The chain runs to 248 residues: Putative eukaryotic initiation factor 4A-like protein (248 aa).

The short motif at V14–M42 is the Q motif element. In terms of domain architecture, Helicase ATP-binding spans I45–I239. S58 to T65 provides a ligand contact to ATP. Residues D185–D188 carry the DEAD box motif.

This sequence belongs to the DEAD box helicase family. eIF4A subfamily.

This Dictyostelium discoideum (Social amoeba) protein is Putative eukaryotic initiation factor 4A-like protein.